Consider the following 274-residue polypeptide: Ethanolamine ammonia-lyase small subunit (274 aa).

3 residues coordinate adenosylcob(III)alamin: valine 161, glutamate 182, and cysteine 211.

The protein belongs to the EutC family. As to quaternary structure, the basic unit is a heterodimer which dimerizes to form tetramers. The heterotetramers trimerize; 6 large subunits form a core ring with 6 small subunits projecting outwards. Adenosylcob(III)alamin serves as cofactor.

It is found in the bacterial microcompartment. The catalysed reaction is ethanolamine = acetaldehyde + NH4(+). The protein operates within amine and polyamine degradation; ethanolamine degradation. In terms of biological role, catalyzes the deamination of various vicinal amino-alcohols to oxo compounds. Allows this organism to utilize ethanolamine as the sole source of nitrogen and carbon in the presence of external vitamin B12. In Pseudomonas fluorescens (strain ATCC BAA-477 / NRRL B-23932 / Pf-5), this protein is Ethanolamine ammonia-lyase small subunit.